A 137-amino-acid chain; its full sequence is Large-conductance mechanosensitive channel (137 aa).

A run of 2 helical transmembrane segments spans residues 10–30 and 76–96; these read FAMR…AAFG and GVFI…FMAI.

Belongs to the MscL family. In terms of assembly, homopentamer.

It localises to the cell inner membrane. Functionally, channel that opens in response to stretch forces in the membrane lipid bilayer. May participate in the regulation of osmotic pressure changes within the cell. The sequence is that of Large-conductance mechanosensitive channel from Klebsiella pneumoniae subsp. pneumoniae (strain ATCC 700721 / MGH 78578).